The following is an 867-amino-acid chain: Mitochondrial escape protein 2 (867 aa).

Disordered regions lie at residues 1–20 (MISA…RGPR) and 44–66 (RTTR…KESG). The transit peptide at 1-41 (MISAHILSRQATRPGHRGPRFTTHSTALLVQRSLGQGLPLA) directs the protein to the mitochondrion. The Mitochondrial matrix portion of the chain corresponds to 42–308 (HRRTTRAWES…IWAWFTSHPR (267 aa)). The span at 48-59 (AWESTSSSTAST) shows a compositional bias: low complexity. The RRM domain maps to 203-293 (SRIRVEFVAA…TKLRLSYEQR (91 aa)). A helical membrane pass occupies residues 309–329 (IVIPLVAALIAAFTVAVFDPI). At 330–867 (REFFVKAHVQ…GVVKGQMVKG (538 aa)) the chain is on the mitochondrial intermembrane side. Positions 614 to 639 (FAHDGQQKDSESGDQDNDNKNQKKDS) are enriched in basic and acidic residues. The tract at residues 614–647 (FAHDGQQKDSESGDQDNDNKNQKKDSNTPAPLDP) is disordered. The stretch at 797 to 857 (LLVLTELAKM…ARLKGLEKEM (61 aa)) forms a coiled coil.

This sequence belongs to the YME2 family.

The protein resides in the mitochondrion inner membrane. Plays a role in maintaining the mitochondrial genome and in controlling the mtDNA escape. Involved in the regulation of mtDNA nucleotide structure and number. May have a dispensable role in early maturation of pre-rRNA. The sequence is that of Mitochondrial escape protein 2 (msp-45) from Neurospora crassa (strain ATCC 24698 / 74-OR23-1A / CBS 708.71 / DSM 1257 / FGSC 987).